A 237-amino-acid polypeptide reads, in one-letter code: tRNA (guanine-N(7)-)-methyltransferase (237 aa).

The S-adenosyl-L-methionine site is built by Glu-68, Glu-93, Asp-120, and Asp-143. Asp-143 is an active-site residue. Residues Lys-147, Asp-179, and 216-219 contribute to the substrate site; that span reads TKFE.

This sequence belongs to the class I-like SAM-binding methyltransferase superfamily. TrmB family.

The enzyme catalyses guanosine(46) in tRNA + S-adenosyl-L-methionine = N(7)-methylguanosine(46) in tRNA + S-adenosyl-L-homocysteine. Its pathway is tRNA modification; N(7)-methylguanine-tRNA biosynthesis. In terms of biological role, catalyzes the formation of N(7)-methylguanine at position 46 (m7G46) in tRNA. The protein is tRNA (guanine-N(7)-)-methyltransferase of Shewanella halifaxensis (strain HAW-EB4).